A 695-amino-acid chain; its full sequence is Electrogenic aspartate/glutamate antiporter Aralar, mitochondrial (695 aa).

Positions 1–310 are N-terminal domain; it reads MPMHIPFPFN…DYSDLSNIAP (310 aa). Over 2-345 the chain is Mitochondrial intermembrane; that stretch reads PMHIPFPFNW…FIQVLESSYR (344 aa). 4 EF-hand domains span residues 71–104, 105–140, 142–175, and 176–211; these read FNDE…GLLC, TPDA…TELH, KIPF…LLHD, and FHEE…VKRH. Asp-84, Ser-86, Asp-88, Leu-90, Glu-95, Asp-118, Asn-122, Thr-124, and Asp-129 together coordinate Ca(2+). 3 residues coordinate Ca(2+): Asp-189, Thr-193, and Asp-200. The linker loop domain stretch occupies residues 311–327; it reads EHYTKHMTHRLAEIKAV. The carrier domain stretch occupies residues 336–627; the sequence is FIQVLESSYR…RLFYVDFGGT (292 aa). Solcar repeat units follow at residues 340 to 431, 439 to 523, and 531 to 619; these read LESS…VRDK, IPTW…TKAM, and NHPL…LQRL. Residues 346-363 form a helical membrane-spanning segment; sequence FTLGSFAGAVGATVVYPI. Over 364 to 405 the chain is Mitochondrial matrix; the sequence is DLVKTRMQNQRAGSYIGEVAYRNSWDCFKKVVRHEGFMGLYR. The chain crosses the membrane as a helical span at residues 406–425; the sequence is GLLPQLMGVAPEKAIKLTVN. Over 426–448 the chain is Mitochondrial intermembrane; it reads DLVRDKLTDKKGNIPTWAEVLAG. The chain crosses the membrane as a helical span at residues 449–462; that stretch reads GCAGASQVVFTNPL. Topologically, residues 463–497 are mitochondrial matrix; the sequence is EIVKIRLQVAGEIASGSKIRAWSVVRELGLFGLYK. The helical transmembrane segment at 498 to 517 threads the bilayer; sequence GARACLLRDVPFSAIYFPTY. Residues 518-536 are Mitochondrial intermembrane-facing; sequence AHTKAMMADKDGYNHPLTL. The chain crosses the membrane as a helical span at residues 537-554; sequence LAAGAIAGVPAASLVTPA. The Mitochondrial matrix portion of the chain corresponds to 555–593; the sequence is DVIKTRLQVVARSGQTTYTGVWDATKKIMAEEGPRAFWK. Residues 594 to 613 form a helical membrane-spanning segment; that stretch reads GTAARVFRSSPQFGVTLVTY. Residues 614–695 lie on the Mitochondrial intermembrane side of the membrane; sequence ELLQRLFYVD…AASPSTATGS (82 aa). Residues 628 to 695 form a C-terminal domain region; it reads QPKGSEAHKI…AASPSTATGS (68 aa).

Belongs to the mitochondrial carrier (TC 2.A.29) family. Homodimer (via N-terminus). It depends on Ca(2+) as a cofactor. Expressed throughout the body in both males and females, including in ovaries and testes. As to expression, specifically expressed in female ovaries. In terms of tissue distribution, expressed throughout the body in both males and females but absent from ovaries and testes.

It is found in the mitochondrion inner membrane. It catalyses the reaction L-aspartate(in) + L-glutamate(out) + H(+)(out) = L-aspartate(out) + L-glutamate(in) + H(+)(in). The enzyme catalyses 3-sulfino-L-alanine(out) + L-glutamate(in) + H(+)(in) = 3-sulfino-L-alanine(in) + L-glutamate(out) + H(+)(out). The catalysed reaction is L-2-aminoadipate(in) + L-glutamate(out) + H(+)(out) = L-2-aminoadipate(out) + L-glutamate(in) + H(+)(in). It carries out the reaction L-glutamine(in) + L-glutamate(out) + Na(+)(out) + H(+)(out) = L-glutamine(out) + L-glutamate(in) + Na(+)(in) + H(+)(in). Activated by Ca(2+). Inhibited by p-chloromercuribenzoate, pyrocarbonate, mersalyl, tannic acid and N-ethylmaleimide. Functionally, mitochondrial electrogenic aspartate/glutamate antiporter that favors efflux of aspartate and entry of glutamate and proton within the mitochondria as part of the malate-aspartate shuttle. Also mediates the exchange of L-cysteinesulfinate (3-sulfino-L-alanine) for L-glutamate. Necessary for gamma-aminobutyric acid (GABA) uptake in brain mitochondria in response to increased mitochondrial membrane polarization; does not possess detectable GABA transport activity but role may be indirect. Possesses transport activity towards L-aspartate, L-glutamate and L-cysteinesulfinate (3-sulfino-L-alanine). L-glutamine transport activity is undetectable. GABA transport activity is undetectable. In terms of biological role, possesses transport activity towards L-aspartate, L-glutamate and L-cysteinesulfinate (3-sulfino-L-alanine). Has a wider substrate specificity range that includes L-2-aminoadipate and L-glutamine. GABA transport activity is undetectable. The sequence is that of Electrogenic aspartate/glutamate antiporter Aralar, mitochondrial from Drosophila melanogaster (Fruit fly).